Reading from the N-terminus, the 157-residue chain is Endoribonuclease YbeY (157 aa).

Residues H122, H126, and H132 each contribute to the Zn(2+) site.

The protein belongs to the endoribonuclease YbeY family. It depends on Zn(2+) as a cofactor.

It localises to the cytoplasm. Single strand-specific metallo-endoribonuclease involved in late-stage 70S ribosome quality control and in maturation of the 3' terminus of the 16S rRNA. The polypeptide is Endoribonuclease YbeY (Bacillus velezensis (strain DSM 23117 / BGSC 10A6 / LMG 26770 / FZB42) (Bacillus amyloliquefaciens subsp. plantarum)).